The following is a 392-amino-acid chain: uncharacterized protein (392 aa).

An N-terminal signal peptide occupies residues M1–G19. C20 is lipidated: N-palmitoyl cysteine. C20 carries the S-diacylglycerol cysteine lipid modification. The interval S148–E173 is disordered. Residues S151–G160 show a composition bias toward gly residues.

It belongs to the TP013X lipoprotein family.

Its subcellular location is the cell membrane. This is an uncharacterized protein from Treponema pallidum (strain Nichols).